Here is a 79-residue protein sequence, read N- to C-terminus: ATP synthase subunit c (79 aa).

2 helical membrane passes run 10–30 (IAGALMMGLGALGAAVGIGVL) and 52–72 (FFIVMGLVDAVPMIAVGLAMY).

This sequence belongs to the ATPase C chain family. As to quaternary structure, F-type ATPases have 2 components, F(1) - the catalytic core - and F(0) - the membrane proton channel. F(1) has five subunits: alpha(3), beta(3), gamma(1), delta(1), epsilon(1). F(0) has three main subunits: a(1), b(2) and c(10-14). The alpha and beta chains form an alternating ring which encloses part of the gamma chain. F(1) is attached to F(0) by a central stalk formed by the gamma and epsilon chains, while a peripheral stalk is formed by the delta and b chains.

It is found in the cell inner membrane. F(1)F(0) ATP synthase produces ATP from ADP in the presence of a proton or sodium gradient. F-type ATPases consist of two structural domains, F(1) containing the extramembraneous catalytic core and F(0) containing the membrane proton channel, linked together by a central stalk and a peripheral stalk. During catalysis, ATP synthesis in the catalytic domain of F(1) is coupled via a rotary mechanism of the central stalk subunits to proton translocation. In terms of biological role, key component of the F(0) channel; it plays a direct role in translocation across the membrane. A homomeric c-ring of between 10-14 subunits forms the central stalk rotor element with the F(1) delta and epsilon subunits. This chain is ATP synthase subunit c, found in Thiobacillus denitrificans (strain ATCC 25259 / T1).